We begin with the raw amino-acid sequence, 238 residues long: Ribosomal RNA small subunit methyltransferase G (238 aa).

S-adenosyl-L-methionine contacts are provided by residues G77, F82, 128–129 (AE), and R147. Residues 219–238 (KKTPARYPRKPGTPNKQPIQ) form a disordered region.

It belongs to the methyltransferase superfamily. RNA methyltransferase RsmG family.

The protein localises to the cytoplasm. In terms of biological role, specifically methylates the N7 position of guanine in position 535 of 16S rRNA. This is Ribosomal RNA small subunit methyltransferase G from Geobacillus thermodenitrificans (strain NG80-2).